A 603-amino-acid chain; its full sequence is Probable GMP synthase [glutamine-hydrolyzing] (603 aa).

The Glutamine amidotransferase type-1 domain occupies 6 to 195 (KIAVVDFGGQ…FIQICGVSKT (190 aa)). Catalysis depends on C81, which acts as the Nucleophile. Residues H170 and E172 contribute to the active site. Residues 196–392 (WGIDQFLKEK…LGLESEWVGR (197 aa)) enclose the GMPS ATP-PPase domain. Position 224-230 (224-230 (SGGVDST)) interacts with ATP.

In terms of assembly, homodimer.

It carries out the reaction XMP + L-glutamine + ATP + H2O = GMP + L-glutamate + AMP + diphosphate + 2 H(+). The protein operates within purine metabolism; GMP biosynthesis; GMP from XMP (L-Gln route): step 1/1. Catalyzes the synthesis of GMP from XMP. This Leptospira interrogans serogroup Icterohaemorrhagiae serovar copenhageni (strain Fiocruz L1-130) protein is Probable GMP synthase [glutamine-hydrolyzing] (guaA).